A 349-amino-acid chain; its full sequence is Anthranilate phosphoribosyltransferase (349 aa).

5-phospho-alpha-D-ribose 1-diphosphate is bound by residues Gly82, 85 to 86 (GD), 92 to 95 (NVST), 110 to 118 (KHGNRAVSG), and Ser122. Gly82 contacts anthranilate. Ser94 is a binding site for Mg(2+). An anthranilate-binding site is contributed by Asn113. Arg168 provides a ligand contact to anthranilate. Mg(2+) contacts are provided by Asp227 and Glu228.

It belongs to the anthranilate phosphoribosyltransferase family. In terms of assembly, homodimer. Requires Mg(2+) as cofactor.

The catalysed reaction is N-(5-phospho-beta-D-ribosyl)anthranilate + diphosphate = 5-phospho-alpha-D-ribose 1-diphosphate + anthranilate. It participates in amino-acid biosynthesis; L-tryptophan biosynthesis; L-tryptophan from chorismate: step 2/5. Functionally, catalyzes the transfer of the phosphoribosyl group of 5-phosphorylribose-1-pyrophosphate (PRPP) to anthranilate to yield N-(5'-phosphoribosyl)-anthranilate (PRA). The protein is Anthranilate phosphoribosyltransferase of Pseudomonas putida (strain ATCC 47054 / DSM 6125 / CFBP 8728 / NCIMB 11950 / KT2440).